The primary structure comprises 695 residues: Pentatricopeptide repeat-containing protein 1, mitochondrial (695 aa).

6 PPR repeats span residues Thr133 to Pro169, Leu170 to Pro204, Ser205 to Leu243, Asn244 to Val278, Thr279 to Pro315, and Ser316 to Leu352. Positions Gln391–Ala416 are disordered. PPR repeat units lie at residues Glu470–Ile485, Asp517–Pro551, Asn552–Pro583, and Asn584–Val618. Positions Trp672–Gly695 are disordered. The span at Thr685 to Gly695 shows a compositional bias: basic and acidic residues.

This sequence belongs to the PTCD1 family. As to quaternary structure, associates with mitochondrial leucine tRNAs. Interacts with ELAC2.

It localises to the mitochondrion. The protein localises to the mitochondrion matrix. Mitochondrial protein implicated in negative regulation of leucine tRNA levels, as well as negative regulation of mitochondria-encoded proteins and COX activity. Also affects the 3'-processing of mitochondrial tRNAs. This is Pentatricopeptide repeat-containing protein 1, mitochondrial (Ptcd1) from Mus musculus (Mouse).